Here is a 285-residue protein sequence, read N- to C-terminus: Probable nudix hydrolase C6G9.05 (285 aa).

In terms of domain architecture, Nudix hydrolase spans 114 to 254; it reads TRFASVLMPL…DLLYVEFNID (141 aa). Positions 153-175 match the Nudix box motif; sequence GRVEPSDGSHYYAALRETYEEIG. Residues E169 and E173 each contribute to the Mg(2+) site.

It belongs to the Nudix hydrolase family. PCD1 subfamily. The cofactor is Mn(2+). It depends on Mg(2+) as a cofactor.

Its function is as follows. Probably mediates the hydrolysis of some nucleoside diphosphate derivatives. This chain is Probable nudix hydrolase C6G9.05, found in Schizosaccharomyces pombe (strain 972 / ATCC 24843) (Fission yeast).